A 329-amino-acid polypeptide reads, in one-letter code: Biotin synthase (329 aa).

The Radical SAM core domain occupies 38 to 262 (NTIQVSTLLS…IMPHSYIRLS (225 aa)). [4Fe-4S] cluster-binding residues include C53, C57, and C60. The [2Fe-2S] cluster site is built by C97, C128, C188, and R260.

It belongs to the radical SAM superfamily. Biotin synthase family. Homodimer. It depends on [4Fe-4S] cluster as a cofactor. The cofactor is [2Fe-2S] cluster.

The catalysed reaction is (4R,5S)-dethiobiotin + (sulfur carrier)-SH + 2 reduced [2Fe-2S]-[ferredoxin] + 2 S-adenosyl-L-methionine = (sulfur carrier)-H + biotin + 2 5'-deoxyadenosine + 2 L-methionine + 2 oxidized [2Fe-2S]-[ferredoxin]. Its pathway is cofactor biosynthesis; biotin biosynthesis; biotin from 7,8-diaminononanoate: step 2/2. In terms of biological role, catalyzes the conversion of dethiobiotin (DTB) to biotin by the insertion of a sulfur atom into dethiobiotin via a radical-based mechanism. The sequence is that of Biotin synthase from Acinetobacter calcoaceticus.